The following is a 352-amino-acid chain: RNA 3'-terminal phosphate cyclase (352 aa).

Residues Gln-100 and 297-301 contribute to the ATP site; that span reads HLADQ. The active-site Tele-AMP-histidine intermediate is His-322.

The protein belongs to the RNA 3'-terminal cyclase family. Type 1 subfamily.

The protein resides in the cytoplasm. It catalyses the reaction a 3'-end 3'-phospho-ribonucleotide-RNA + ATP = a 3'-end 2',3'-cyclophospho-ribonucleotide-RNA + AMP + diphosphate. Its function is as follows. Catalyzes the conversion of 3'-phosphate to a 2',3'-cyclic phosphodiester at the end of RNA. The mechanism of action of the enzyme occurs in 3 steps: (A) adenylation of the enzyme by ATP; (B) transfer of adenylate to an RNA-N3'P to produce RNA-N3'PP5'A; (C) and attack of the adjacent 2'-hydroxyl on the 3'-phosphorus in the diester linkage to produce the cyclic end product. The biological role of this enzyme is unknown but it is likely to function in some aspects of cellular RNA processing. The polypeptide is RNA 3'-terminal phosphate cyclase (Methanosarcina mazei (strain ATCC BAA-159 / DSM 3647 / Goe1 / Go1 / JCM 11833 / OCM 88) (Methanosarcina frisia)).